The following is a 211-amino-acid chain: Molybdenum cofactor guanylyltransferase (211 aa).

Residues 12–14, Lys25, Asn53, Asp71, and Asp101 each bind GTP; that span reads LAG. Asp101 lines the Mg(2+) pocket.

It belongs to the MobA family. Monomer. It depends on Mg(2+) as a cofactor.

The protein localises to the cytoplasm. It catalyses the reaction Mo-molybdopterin + GTP + H(+) = Mo-molybdopterin guanine dinucleotide + diphosphate. Transfers a GMP moiety from GTP to Mo-molybdopterin (Mo-MPT) cofactor (Moco or molybdenum cofactor) to form Mo-molybdopterin guanine dinucleotide (Mo-MGD) cofactor. The chain is Molybdenum cofactor guanylyltransferase from Acidovorax sp. (strain JS42).